The following is a 422-amino-acid chain: Glucosylglycerol-phosphate phosphatase (422 aa).

The active-site Proton donor is the aspartate 403.

Belongs to the histidine acid phosphatase family. As to quaternary structure, monomer. Interacts with GGPS.

It catalyses the reaction 2-O-(alpha-D-glucopyranosyl)-sn-glycerol 3-phosphate + H2O = 2-O-(alpha-D-glucopyranosyl)glycerol + phosphate. In terms of biological role, phosphorylates glucosylglycerol-phosphate the precursor of the osmoprotectant glucosylglycerol necessary for salt adaptation of Synechocystis. This is Glucosylglycerol-phosphate phosphatase (stpA) from Synechocystis sp. (strain ATCC 27184 / PCC 6803 / Kazusa).